A 549-amino-acid polypeptide reads, in one-letter code: Cytoplasmic trehalase (549 aa).

Residues Arg-168, 175–176 (WD), Asn-212, 221–223 (RSQ), 292–294 (RDE), and Gly-324 each bind substrate. Residues Asp-326 and Glu-509 each act as proton donor/acceptor in the active site. Glu-525 serves as a coordination point for substrate.

The protein belongs to the glycosyl hydrolase 37 family. As to quaternary structure, monomer.

Its subcellular location is the cytoplasm. The catalysed reaction is alpha,alpha-trehalose + H2O = alpha-D-glucose + beta-D-glucose. The protein operates within glycan degradation; trehalose degradation; D-glucose from alpha,alpha-trehalose: step 1/1. Hydrolyzes trehalose to glucose. Could be involved, in cells returning to low osmolarity conditions, in the utilization of the accumulated cytoplasmic trehalose, which was synthesized in response to high osmolarity. This is Cytoplasmic trehalase from Escherichia coli O157:H7.